We begin with the raw amino-acid sequence, 552 residues long: Probable protein kinase UbiB (552 aa).

Positions 121 to 504 (HFDTVPLASA…QGLQRRVVNA (384 aa)) constitute a Protein kinase domain. ATP is bound by residues 127-135 (LASASISQV) and K149. D284 (proton acceptor) is an active-site residue. Transmembrane regions (helical) follow at residues 501-521 (VVNA…YGLH) and 526-546 (YLGA…LALF).

Belongs to the ABC1 family. UbiB subfamily.

The protein localises to the cell inner membrane. Its pathway is cofactor biosynthesis; ubiquinone biosynthesis [regulation]. In terms of biological role, is probably a protein kinase regulator of UbiI activity which is involved in aerobic coenzyme Q (ubiquinone) biosynthesis. This Xylella fastidiosa (strain 9a5c) protein is Probable protein kinase UbiB.